The primary structure comprises 399 residues: Argininosuccinate synthase (399 aa).

An ATP-binding site is contributed by 8-16; that stretch reads AYSGGLDTS. Residue Tyr87 coordinates L-citrulline. Residue Gly117 participates in ATP binding. Residues Thr119, Asn123, and Asp124 each contribute to the L-aspartate site. Position 123 (Asn123) interacts with L-citrulline. Positions 127, 175, 260, and 272 each coordinate L-citrulline.

It belongs to the argininosuccinate synthase family. Type 1 subfamily. Homotetramer.

The protein localises to the cytoplasm. The catalysed reaction is L-citrulline + L-aspartate + ATP = 2-(N(omega)-L-arginino)succinate + AMP + diphosphate + H(+). The protein operates within amino-acid biosynthesis; L-arginine biosynthesis; L-arginine from L-ornithine and carbamoyl phosphate: step 2/3. This chain is Argininosuccinate synthase, found in Rhodococcus erythropolis (strain PR4 / NBRC 100887).